The chain runs to 131 residues: Small ribosomal subunit protein uS8 (131 aa).

The protein belongs to the universal ribosomal protein uS8 family. As to quaternary structure, part of the 30S ribosomal subunit. Contacts proteins S5 and S12.

In terms of biological role, one of the primary rRNA binding proteins, it binds directly to 16S rRNA central domain where it helps coordinate assembly of the platform of the 30S subunit. In Legionella pneumophila subsp. pneumophila (strain Philadelphia 1 / ATCC 33152 / DSM 7513), this protein is Small ribosomal subunit protein uS8.